A 956-amino-acid chain; its full sequence is DNA repair endonuclease UVH1 (956 aa).

Residues 256–272 (RRQLDPIWHTLGKRTKQ) carry the Nuclear localization signal motif. 3 disordered regions span residues 343-363 (HVKN…SVEA), 516-593 (TTDM…RPSG), and 697-718 (SSTE…GGRK). Positions 697-711 (SSTEFPASSTQNSLT) are enriched in polar residues. The ERCC4 domain occupies 725 to 805 (QVIVDMREFM…IPVLLIEFSQ (81 aa)).

The protein belongs to the XPF family. In terms of assembly, heterodimer with ERCC1/RAD10. In terms of tissue distribution, isoform 1 and isoform 2 are widely expressed, predominantly in flowers, meristems and stems. Isoform 3 is detected at low levels.

Its subcellular location is the nucleus. Functionally, seems to be involved in nucleotide excision repair (NER) of damaged DNA (dark repair mechanism). Involved in repair of UV light, and probably oxidative damage. The UVH1/RAD1-ERCC1/RAD10 complex may act as an endonuclease making DNA incision 5' to the lesion site. In vitro, is implicated in double strand breaks (DSBs) repair and is required for homologous recombination in the presence of non-homologous overhangs. May mediate the induction of a DNA-damage sensitive cell-cycle checkpoint during the G2 phase. This Arabidopsis thaliana (Mouse-ear cress) protein is DNA repair endonuclease UVH1 (UVH1).